The chain runs to 346 residues: Transcription factor 19 (346 aa).

Residues 31-88 (YRLGCRADLCDVALRPQQEPGFISEVHAELHAERRGDDWRVSLEDHSSQGTLVNNVRL) form the FHA domain. S78 is modified (phosphoserine). Disordered regions lie at residues 136–168 (PRSRGEEGETRAGFRPMLPSQGAPQRPLSTLSP) and 190–289 (LTFS…AAGG). Over residues 138-147 (SRGEEGETRA) the composition is skewed to basic and acidic residues. Over residues 190–208 (LTFSRSGSGPQNPPVSTTP) the composition is skewed to polar residues. The segment covering 250–260 (EPRKKLLRVEK) has biased composition (basic and acidic residues). The PHD-type zinc finger occupies 294–343 (AAPCCCLPQEETVAWVQCDGCDTWFHVACVGCSIQAAKEADFRCPGCRVG). Positions 297, 299, 311, 314, 319, 322, 337, and 340 each coordinate Zn(2+).

The protein resides in the nucleus. Its function is as follows. Potential transcription factor that may play a role in the regulation of genes involved in cell cycle G1/S transition. May bind to regulatory elements of genes, including the promoter of the transcription factor FOXO1. This is Transcription factor 19 (TCF19) from Sus scrofa (Pig).